The primary structure comprises 525 residues: GMP synthase [glutamine-hydrolyzing] (525 aa).

Residues 9–207 (RILILDFGSQ…VRDICQCEAL (199 aa)) form the Glutamine amidotransferase type-1 domain. The active-site Nucleophile is the Cys86. Catalysis depends on residues His181 and Glu183. The GMPS ATP-PPase domain maps to 208 to 400 (WTPAKIIDDA…LGLPYDMLYR (193 aa)). 235-241 (SGGVDSS) is a binding site for ATP.

Homodimer.

The catalysed reaction is XMP + L-glutamine + ATP + H2O = GMP + L-glutamate + AMP + diphosphate + 2 H(+). Its pathway is purine metabolism; GMP biosynthesis; GMP from XMP (L-Gln route): step 1/1. In terms of biological role, catalyzes the synthesis of GMP from XMP. This Shigella dysenteriae serotype 1 (strain Sd197) protein is GMP synthase [glutamine-hydrolyzing].